The following is a 500-amino-acid chain: L-arabinose isomerase (500 aa).

Mn(2+) is bound by residues E306, E333, H350, and H450.

This sequence belongs to the arabinose isomerase family. Homohexamer. Requires Mn(2+) as cofactor.

It carries out the reaction beta-L-arabinopyranose = L-ribulose. Its pathway is carbohydrate degradation; L-arabinose degradation via L-ribulose; D-xylulose 5-phosphate from L-arabinose (bacterial route): step 1/3. In terms of biological role, catalyzes the conversion of L-arabinose to L-ribulose. The polypeptide is L-arabinose isomerase (Yersinia pestis bv. Antiqua (strain Nepal516)).